Reading from the N-terminus, the 285-residue chain is Phosphoribosylaminoimidazole-succinocarboxamide synthase (285 aa).

This sequence belongs to the SAICAR synthetase family.

The catalysed reaction is 5-amino-1-(5-phospho-D-ribosyl)imidazole-4-carboxylate + L-aspartate + ATP = (2S)-2-[5-amino-1-(5-phospho-beta-D-ribosyl)imidazole-4-carboxamido]succinate + ADP + phosphate + 2 H(+). It functions in the pathway purine metabolism; IMP biosynthesis via de novo pathway; 5-amino-1-(5-phospho-D-ribosyl)imidazole-4-carboxamide from 5-amino-1-(5-phospho-D-ribosyl)imidazole-4-carboxylate: step 1/2. The chain is Phosphoribosylaminoimidazole-succinocarboxamide synthase from Leptospira interrogans serogroup Icterohaemorrhagiae serovar copenhageni (strain Fiocruz L1-130).